The primary structure comprises 934 residues: Phosphoenolpyruvate carboxylase (934 aa).

Active-site residues include H161 and K593.

The protein belongs to the PEPCase type 1 family. Mg(2+) is required as a cofactor.

The enzyme catalyses oxaloacetate + phosphate = phosphoenolpyruvate + hydrogencarbonate. Functionally, forms oxaloacetate, a four-carbon dicarboxylic acid source for the tricarboxylic acid cycle. This Mycobacterium leprae (strain TN) protein is Phosphoenolpyruvate carboxylase (ppc).